We begin with the raw amino-acid sequence, 583 residues long: Radixin (583 aa).

An FERM domain is found at 5–295 (INVRVTTMDA…GNHELYMRRR (291 aa)). Residue 60–63 (KLNK) coordinates a 1,2-diacyl-sn-glycero-3-phospho-(1D-myo-inositol). Lys-83 bears the N6-succinyllysine mark. Lys-278 contributes to the a 1,2-diacyl-sn-glycero-3-phospho-(1D-myo-inositol) binding site. Disordered stretches follow at residues 310-330 (REEKHQKQLERAQLENEKKKR), 376-407 (DQERKRAKEEAERLEKERRAAEEAKSAIAKQA), and 462-526 (ELKT…RVKK). Basic and acidic residues predominate over residues 376–400 (DQERKRAKEEAERLEKERRAAEEAK). The span at 469 to 480 (APPPPPPPPVIP) shows a compositional bias: pro residues. Basic and acidic residues-rich tracts occupy residues 483–492 (ENEHDEHDEN) and 506–525 (MNHRSEEERVTETQKNERVK). Thr-564 is subject to Phosphothreonine; by ROCK2.

In terms of assembly, binds NHERF1. Interacts with NHERF1, NHERF2, LAYN, MME/NEP and ICAM2. Interacts with CPNE1 (via VWFA domain) and CPNE4 (via VWFA domain). Interacts (via FERM domain) with SPN/CD43 cytoplasmic tail. Interacts with CD44. Interacts with CLIC5; may work together in a complex which also includes EZR and MYO6 to stabilize linkages between the plasma membrane and subjacent actin cytoskeleton at the base of stereocilia. Phosphorylated by tyrosine-protein kinases. Phosphorylation by ROCK2 suppresses the head-to-tail association of the N-terminal and C-terminal halves resulting in an opened conformation which is capable of actin and membrane-binding.

The protein resides in the cell membrane. It is found in the cytoplasm. Its subcellular location is the cytoskeleton. The protein localises to the cleavage furrow. It localises to the cell projection. The protein resides in the microvillus. It is found in the stereocilium. A head-to-tail association, of the N-terminal and C-terminal halves results in a closed conformation (inactive form) which is incapable of actin or membrane-binding. In terms of biological role, probably plays a crucial role in the binding of the barbed end of actin filaments to the plasma membrane. The polypeptide is Radixin (RDX) (Homo sapiens (Human)).